The primary structure comprises 84 residues: Exodeoxyribonuclease 7 small subunit (84 aa).

The protein belongs to the XseB family. As to quaternary structure, heterooligomer composed of large and small subunits.

It is found in the cytoplasm. It catalyses the reaction Exonucleolytic cleavage in either 5'- to 3'- or 3'- to 5'-direction to yield nucleoside 5'-phosphates.. In terms of biological role, bidirectionally degrades single-stranded DNA into large acid-insoluble oligonucleotides, which are then degraded further into small acid-soluble oligonucleotides. This is Exodeoxyribonuclease 7 small subunit from Bartonella bacilliformis (strain ATCC 35685 / KC583 / Herrer 020/F12,63).